We begin with the raw amino-acid sequence, 1188 residues long: DNA-directed RNA polymerase subunit beta (1188 aa).

This sequence belongs to the RNA polymerase beta chain family. In terms of assembly, the RNAP catalytic core consists of 2 alpha, 1 beta, 1 beta' and 1 omega subunit. When a sigma factor is associated with the core the holoenzyme is formed, which can initiate transcription.

It catalyses the reaction RNA(n) + a ribonucleoside 5'-triphosphate = RNA(n+1) + diphosphate. DNA-dependent RNA polymerase catalyzes the transcription of DNA into RNA using the four ribonucleoside triphosphates as substrates. The chain is DNA-directed RNA polymerase subunit beta from Streptococcus pyogenes serotype M18 (strain MGAS8232).